A 142-amino-acid polypeptide reads, in one-letter code: Hemoglobin subunit alpha-1 (142 aa).

Serine 1 is modified (N-acetylserine). A Globin domain is found at 1-142 (SLSVKDKAAV…VALALAERYR (142 aa)). Histidine 59 contributes to the O2 binding site. Heme b is bound at residue histidine 88.

It belongs to the globin family. In terms of assembly, hb 1 is a heterotetramer of two alpha-1 and two beta-1 chains. In terms of tissue distribution, red blood cells.

In terms of biological role, involved in oxygen transport from gills to the various peripheral tissues. This Gobionotothen gibberifrons (Humped rockcod) protein is Hemoglobin subunit alpha-1 (hba1).